The chain runs to 529 residues: Bifunctional purine biosynthesis protein PurH (529 aa).

Residues 1 to 148 form the MGS-like domain; it reads MQQRRPVRRA…KNHRDVAIVV (148 aa). K287 is subject to N6-acetyllysine.

Belongs to the PurH family.

The catalysed reaction is (6R)-10-formyltetrahydrofolate + 5-amino-1-(5-phospho-beta-D-ribosyl)imidazole-4-carboxamide = 5-formamido-1-(5-phospho-D-ribosyl)imidazole-4-carboxamide + (6S)-5,6,7,8-tetrahydrofolate. It carries out the reaction IMP + H2O = 5-formamido-1-(5-phospho-D-ribosyl)imidazole-4-carboxamide. It functions in the pathway purine metabolism; IMP biosynthesis via de novo pathway; 5-formamido-1-(5-phospho-D-ribosyl)imidazole-4-carboxamide from 5-amino-1-(5-phospho-D-ribosyl)imidazole-4-carboxamide (10-formyl THF route): step 1/1. It participates in purine metabolism; IMP biosynthesis via de novo pathway; IMP from 5-formamido-1-(5-phospho-D-ribosyl)imidazole-4-carboxamide: step 1/1. This chain is Bifunctional purine biosynthesis protein PurH, found in Escherichia coli O6:K15:H31 (strain 536 / UPEC).